Reading from the N-terminus, the 72-residue chain is Cytochrome b-c1 complex subunit 8-2, mitochondrial (72 aa).

Residues 1–41 (MGKQPVKLKAVVYALSPFQQKIMTGLWKDLPEKIHHKVSEN) are Mitochondrial matrix-facing. The helical transmembrane segment at 42-58 (WISTILLVAPVVGTYSY) threads the bilayer. Topologically, residues 59–72 (AQYFKEQEKLEHRF) are mitochondrial intermembrane.

The protein belongs to the UQCRQ/QCR8 family. In terms of assembly, component of the ubiquinol-cytochrome c oxidoreductase (cytochrome b-c1 complex, complex III, CIII), a multisubunit enzyme composed of 10 subunits. The complex is composed of 3 respiratory subunits cytochrome b (MT-CYB), cytochrome c1 (CYC1-1 or CYC1-2) and Rieske protein (UCR1-1 or UCR1-2), 2 core protein subunits MPPalpha1 (or MPPalpha2) and MPPB, and 5 low-molecular weight protein subunits QCR7-1 (or QCR7-2), UCRQ-1 (or UCRQ-2), QCR9, UCRY and probably QCR6-1 (or QCR6-2). The complex exists as an obligatory dimer and forms supercomplexes (SCs) in the inner mitochondrial membrane with NADH-ubiquinone oxidoreductase (complex I, CI), resulting in different assemblies (supercomplexes SCI(1)III(2) and SCI(2)III(4)).

It is found in the mitochondrion inner membrane. In terms of biological role, component of the ubiquinol-cytochrome c oxidoreductase, a multisubunit transmembrane complex that is part of the mitochondrial electron transport chain which drives oxidative phosphorylation. The respiratory chain contains 3 multisubunit complexes succinate dehydrogenase (complex II, CII), ubiquinol-cytochrome c oxidoreductase (cytochrome b-c1 complex, complex III, CIII) and cytochrome c oxidase (complex IV, CIV), that cooperate to transfer electrons derived from NADH and succinate to molecular oxygen, creating an electrochemical gradient over the inner membrane that drives transmembrane transport and the ATP synthase. The cytochrome b-c1 complex catalyzes electron transfer from ubiquinol to cytochrome c, linking this redox reaction to translocation of protons across the mitochondrial inner membrane, with protons being carried across the membrane as hydrogens on the quinol. In the process called Q cycle, 2 protons are consumed from the matrix, 4 protons are released into the intermembrane space and 2 electrons are passed to cytochrome c. This Arabidopsis thaliana (Mouse-ear cress) protein is Cytochrome b-c1 complex subunit 8-2, mitochondrial (UCRQ-2).